We begin with the raw amino-acid sequence, 362 residues long: MAALTLQSVKKTYDGKQFVLHGIDVDVADGEFVVMVGPSGCGKSTLLRMVAGLERISEGSISIAGKVVNQLEPKDRNIAMVFQNYALYPHMSVAENMGYALKIAGVDRAQIQKRVNAAAQILELEALLQRKPRELSGGQRQRVAMGRAIVREPAVFLFDEPLSNLDARLRVQMRLEIQRLHARLATTSLYVTHDQIEAMTLAQRVIVMNKGHAEQIGAPTEVYERPATVFVASFIGSPGMNLLEGRVSDDGAVFAVAGNGPELPLAGVVSIGREVAKGREWTLGIRPEHMSPGQADAPHATLTVDSCELLGADNLAHGRWGKHDVTVRLPHAHRPAAGEALQVALPAQHLHFFDPASGRRAN.

Residues 4 to 235 (LTLQSVKKTY…PATVFVASFI (232 aa)) form the ABC transporter domain. 37 to 44 (GPSGCGKS) lines the ATP pocket.

This sequence belongs to the ABC transporter superfamily. sn-glycerol-3-phosphate importer (TC 3.A.1.1.3) family. In terms of assembly, the complex is composed of two ATP-binding proteins (UgpC), two transmembrane proteins (UgpA and UgpE) and a solute-binding protein (UgpB).

The protein localises to the cell inner membrane. The catalysed reaction is sn-glycerol 3-phosphate(out) + ATP + H2O = sn-glycerol 3-phosphate(in) + ADP + phosphate + H(+). Part of the ABC transporter complex UgpBAEC involved in sn-glycerol-3-phosphate (G3P) import. Responsible for energy coupling to the transport system. The chain is sn-glycerol-3-phosphate import ATP-binding protein UgpC from Paraburkholderia xenovorans (strain LB400).